The sequence spans 346 residues: UDP-N-acetylenolpyruvoylglucosamine reductase (346 aa).

Positions 23–194 (FDVRARLACR…VSVTFRLPKV (172 aa)) constitute an FAD-binding PCMH-type domain. Residue arginine 170 is part of the active site. Residue serine 246 is the Proton donor of the active site. The active site involves glutamate 342.

Belongs to the MurB family. It depends on FAD as a cofactor.

It localises to the cytoplasm. The catalysed reaction is UDP-N-acetyl-alpha-D-muramate + NADP(+) = UDP-N-acetyl-3-O-(1-carboxyvinyl)-alpha-D-glucosamine + NADPH + H(+). The protein operates within cell wall biogenesis; peptidoglycan biosynthesis. In terms of biological role, cell wall formation. The polypeptide is UDP-N-acetylenolpyruvoylglucosamine reductase (Paraburkholderia phymatum (strain DSM 17167 / CIP 108236 / LMG 21445 / STM815) (Burkholderia phymatum)).